A 760-amino-acid polypeptide reads, in one-letter code: Probable myosin-binding protein 4 (760 aa).

Residues 26 to 46 (WFLILLMFIDALLSYLLVWFA) traverse the membrane as a helical segment. Disordered stretches follow at residues 161–189 (SRGR…SLKK), 247–273 (SEKR…QPVL), 292–311 (SMLG…VKAK), and 348–595 (EAEV…KHSA). Residues 352-366 (SGSSSPSGGEFLSPS) are compositionally biased toward low complexity. Residues 371–383 (ASREIRIQEHDDS) are compositionally biased toward basic and acidic residues. Over residues 385-394 (DFSQNITSSA) the composition is skewed to polar residues. Positions 388–416 (QNITSSAMEIEEFEAAIEQKESDHMDVSG) form a coiled coil. Over residues 404–413 (IEQKESDHMD) the composition is skewed to basic and acidic residues. Composition is skewed to acidic residues over residues 446–458 (LEQE…ESEV) and 517–526 (EEDVDNEESE). Composition is skewed to basic and acidic residues over residues 537–550 (VKEE…HGDH) and 562–580 (SKEE…KITE). A GTD-binding domain is found at 611 to 709 (SLVEVLKQQL…DLEMELEYYR (99 aa)). Residues 725-760 (GILGNTEETNVTSPTDETSIKDSTDTKLTGSPSAEN) are disordered. 2 stretches are compositionally biased toward polar residues: residues 730–741 (TEETNVTSPTDE) and 750–760 (TKLTGSPSAEN).

The protein localises to the endomembrane system. In terms of biological role, membrane-anchored myosin receptors that define a distinct, plant-specific transport vesicle compartment. The protein is Probable myosin-binding protein 4 of Arabidopsis thaliana (Mouse-ear cress).